A 491-amino-acid chain; its full sequence is UDP-N-acetylmuramate--L-alanine ligase (491 aa).

126 to 132 (GTHGKTT) contributes to the ATP binding site.

This sequence belongs to the MurCDEF family.

It localises to the cytoplasm. It carries out the reaction UDP-N-acetyl-alpha-D-muramate + L-alanine + ATP = UDP-N-acetyl-alpha-D-muramoyl-L-alanine + ADP + phosphate + H(+). Its pathway is cell wall biogenesis; peptidoglycan biosynthesis. In terms of biological role, cell wall formation. This Shigella sonnei (strain Ss046) protein is UDP-N-acetylmuramate--L-alanine ligase.